Here is a 100-residue protein sequence, read N- to C-terminus: NADH-quinone oxidoreductase subunit K 2 (100 aa).

3 helical membrane-spanning segments follow: residues 4–24 (LHSY…GVLI), 29–49 (IVIF…FIAL), and 60–80 (IFVF…LALM).

This sequence belongs to the complex I subunit 4L family. In terms of assembly, NDH-1 is composed of 14 different subunits. Subunits NuoA, H, J, K, L, M, N constitute the membrane sector of the complex.

It localises to the cell inner membrane. It carries out the reaction a quinone + NADH + 5 H(+)(in) = a quinol + NAD(+) + 4 H(+)(out). Functionally, NDH-1 shuttles electrons from NADH, via FMN and iron-sulfur (Fe-S) centers, to quinones in the respiratory chain. The immediate electron acceptor for the enzyme in this species is believed to be ubiquinone. Couples the redox reaction to proton translocation (for every two electrons transferred, four hydrogen ions are translocated across the cytoplasmic membrane), and thus conserves the redox energy in a proton gradient. This Geobacter metallireducens (strain ATCC 53774 / DSM 7210 / GS-15) protein is NADH-quinone oxidoreductase subunit K 2.